Consider the following 352-residue polypeptide: Thymidine kinase (352 aa).

Residue 26-33 (GSMGIGKT) participates in ATP binding. The active-site Proton acceptor is Glu54. Gln95 serves as a coordination point for substrate. An ATP-binding site is contributed by Arg185. Residue Arg191 coordinates substrate.

This sequence belongs to the herpesviridae thymidine kinase family. Homodimer.

The catalysed reaction is thymidine + ATP = dTMP + ADP + H(+). Functionally, catalyzes the transfer of the gamma-phospho group of ATP to thymidine to generate dTMP in the salvage pathway of pyrimidine synthesis. The dTMP serves as a substrate for DNA polymerase during viral DNA replication. Allows the virus to be reactivated and to grow in non-proliferative cells lacking a high concentration of phosphorylated nucleic acid precursors. This Gallus gallus (Chicken) protein is Thymidine kinase.